The chain runs to 213 residues: MKPYQRQFIEFALSKQVLKFGEFTLKSGRKSPYFFNAGLFNTGRDLALLGRFYAEALVDSGIEFDLLFGPAYKGIPIATTTAVALAEHHDLDLPYCFNRKEAKDHGEGGNLVGSALQGRVMLVDDVITAGTAIRESMEIIQANGATLAGVLISLDRQERGRGEISAIQEVERDYNCKVISIITLKDLIAYLEGKPEMAEHLAAVKAYREEFGV.

Lysine 26 serves as a coordination point for 5-phospho-alpha-D-ribose 1-diphosphate. 34–35 is a binding site for orotate; the sequence is FF. 5-phospho-alpha-D-ribose 1-diphosphate contacts are provided by residues 72–73, arginine 99, lysine 100, lysine 103, histidine 105, and 124–132; these read YK and DDVITAGTA. Positions 128 and 156 each coordinate orotate.

Belongs to the purine/pyrimidine phosphoribosyltransferase family. PyrE subfamily. In terms of assembly, homodimer. It depends on Mg(2+) as a cofactor.

It catalyses the reaction orotidine 5'-phosphate + diphosphate = orotate + 5-phospho-alpha-D-ribose 1-diphosphate. Its pathway is pyrimidine metabolism; UMP biosynthesis via de novo pathway; UMP from orotate: step 1/2. In terms of biological role, catalyzes the transfer of a ribosyl phosphate group from 5-phosphoribose 1-diphosphate to orotate, leading to the formation of orotidine monophosphate (OMP). This chain is Orotate phosphoribosyltransferase, found in Shigella dysenteriae serotype 1 (strain Sd197).